The primary structure comprises 309 residues: Type II methyltransferase M.HindIII (309 aa).

The protein belongs to the N(4)/N(6)-methyltransferase family.

It carries out the reaction a 2'-deoxyadenosine in DNA + S-adenosyl-L-methionine = an N(6)-methyl-2'-deoxyadenosine in DNA + S-adenosyl-L-homocysteine + H(+). In terms of biological role, a beta subtype methylase that recognizes the double-stranded sequence 5'-AAGCTT-3', methylates A-1 on both strands, and protects the DNA from cleavage by the HindIII endonuclease. In Haemophilus influenzae (strain ATCC 51907 / DSM 11121 / KW20 / Rd), this protein is Type II methyltransferase M.HindIII.